The primary structure comprises 145 residues: Secreted RxLR effector protein 43 (145 aa).

The first 20 residues, 1-20 (MKVTMALAALCVALQAPCIG), serve as a signal peptide directing secretion. Positions 31–34 (RHLR) match the RxLR motif.

This sequence belongs to the RxLR effector family.

The protein localises to the secreted. It is found in the host nucleus. Its subcellular location is the host cytoplasm. In terms of biological role, secreted effector that completely suppresses the host cell death induced by cell death-inducing proteins. The protein is Secreted RxLR effector protein 43 of Plasmopara viticola (Downy mildew of grapevine).